Consider the following 203-residue polypeptide: Glycerol-3-phosphate acyltransferase (203 aa).

Helical transmembrane passes span 12-32, 66-86, 88-108, 118-138, and 159-179; these read ATLL…GLIL, TLLL…LWGV, AGIA…WLSF, IGVL…IWLA, and IALY…MTVI.

This sequence belongs to the PlsY family. As to quaternary structure, probably interacts with PlsX.

It is found in the cell inner membrane. It catalyses the reaction an acyl phosphate + sn-glycerol 3-phosphate = a 1-acyl-sn-glycero-3-phosphate + phosphate. The protein operates within lipid metabolism; phospholipid metabolism. Its function is as follows. Catalyzes the transfer of an acyl group from acyl-phosphate (acyl-PO(4)) to glycerol-3-phosphate (G3P) to form lysophosphatidic acid (LPA). This enzyme utilizes acyl-phosphate as fatty acyl donor, but not acyl-CoA or acyl-ACP. In Sinorhizobium fredii (strain NBRC 101917 / NGR234), this protein is Glycerol-3-phosphate acyltransferase.